The sequence spans 208 residues: Large ribosomal subunit protein uL3 (208 aa).

Gln-149 is subject to N5-methylglutamine.

It belongs to the universal ribosomal protein uL3 family. In terms of assembly, part of the 50S ribosomal subunit. Forms a cluster with proteins L14 and L19. Post-translationally, methylated by PrmB.

One of the primary rRNA binding proteins, it binds directly near the 3'-end of the 23S rRNA, where it nucleates assembly of the 50S subunit. The protein is Large ribosomal subunit protein uL3 of Actinobacillus succinogenes (strain ATCC 55618 / DSM 22257 / CCUG 43843 / 130Z).